The sequence spans 90 residues: UPF0297 protein LVIS_1222 (90 aa).

This sequence belongs to the UPF0297 family.

This is UPF0297 protein LVIS_1222 from Levilactobacillus brevis (strain ATCC 367 / BCRC 12310 / CIP 105137 / JCM 1170 / LMG 11437 / NCIMB 947 / NCTC 947) (Lactobacillus brevis).